Consider the following 510-residue polypeptide: Lysine--tRNA ligase (510 aa).

Residues Glu420 and Glu427 each coordinate Mg(2+).

It belongs to the class-II aminoacyl-tRNA synthetase family. Homodimer. The cofactor is Mg(2+).

It localises to the cytoplasm. The enzyme catalyses tRNA(Lys) + L-lysine + ATP = L-lysyl-tRNA(Lys) + AMP + diphosphate. The polypeptide is Lysine--tRNA ligase (Vibrio vulnificus (strain CMCP6)).